An 81-amino-acid chain; its full sequence is Photosystem I iron-sulfur center (81 aa).

4Fe-4S ferredoxin-type domains follow at residues 2-31 (SHSV…MIPW) and 39-68 (IASA…VRVY). [4Fe-4S] cluster-binding residues include Cys11, Cys14, Cys17, Cys21, Cys48, Cys51, Cys54, and Cys58.

In terms of assembly, the eukaryotic PSI reaction center is composed of at least 11 subunits. [4Fe-4S] cluster serves as cofactor.

Its subcellular location is the plastid thylakoid membrane. It catalyses the reaction reduced [plastocyanin] + hnu + oxidized [2Fe-2S]-[ferredoxin] = oxidized [plastocyanin] + reduced [2Fe-2S]-[ferredoxin]. In terms of biological role, apoprotein for the two 4Fe-4S centers FA and FB of photosystem I (PSI); essential for photochemical activity. FB is the terminal electron acceptor of PSI, donating electrons to ferredoxin. The C-terminus interacts with PsaA/B/D and helps assemble the protein into the PSI complex. Required for binding of PsaD and PsaE to PSI. PSI is a plastocyanin-ferredoxin oxidoreductase, converting photonic excitation into a charge separation, which transfers an electron from the donor P700 chlorophyll pair to the spectroscopically characterized acceptors A0, A1, FX, FA and FB in turn. The protein is Photosystem I iron-sulfur center of Cuscuta obtusiflora (Peruvian dodder).